The chain runs to 1452 residues: ABC multidrug transporter A-1 (1452 aa).

A disordered region spans residues 1–20; sequence MNESHEAGKNSSTNVEEREE. Asn2, Asn10, Asn228, Asn287, and Asn311 each carry an N-linked (GlcNAc...) asparagine glycan. The ABC transporter 1 domain occupies 110-363; the sequence is LKTLSLARIA…FLQMGFVCPD (254 aa). The next 6 membrane-spanning stretches (helical) occupy residues 474–494, 508–528, 554–574, 583–603, 616–636, and 725–745; these read VTIS…SIFY, ALLF…MLTL, MIMD…VLYF, GAFF…SMFF, VLPF…FAIP, and IGVI…ATDF. Residues 802–1044 form the ABC transporter 2 domain; it reads FQWKDVCFDI…ILIDYFVRNG (243 aa). Residue 838–845 coordinates ATP; it reads GVSGAGKT. 6 consecutive transmembrane segments (helical) span residues 1153-1173, 1183-1203, 1223-1243, 1271-1291, 1297-1317, and 1324-1344; these read ALCV…PNTI, IFML…HFVA, FLIA…VLMF, LMIW…IAAF, AGNL…VLAT, and FWIF…MLSV. N-linked (GlcNAc...) asparagine glycans are attached at residues Asn1350, Asn1365, and Asn1391. A helical membrane pass occupies residues 1418–1438; sequence FGLMWVFIVFNIFAACSLYWW.

It belongs to the ABC transporter superfamily. ABCG family. PDR (TC 3.A.1.205) subfamily.

It is found in the membrane. Functionally, ABC transporter that seems not to be involved in the efflux of toxic substances, at least not the classical compounds such as itraconazole, amphotericin B, voriconazole, posaconazole, ravuconazole, or echinocandins. In Aspergillus fumigatus (strain ATCC MYA-4609 / CBS 101355 / FGSC A1100 / Af293) (Neosartorya fumigata), this protein is ABC multidrug transporter A-1.